A 132-amino-acid polypeptide reads, in one-letter code: Small ribosomal subunit protein uS9 (132 aa).

It belongs to the universal ribosomal protein uS9 family.

The sequence is that of Small ribosomal subunit protein uS9 (rps9) from Thermoplasma volcanium (strain ATCC 51530 / DSM 4299 / JCM 9571 / NBRC 15438 / GSS1).